Consider the following 135-residue polypeptide: Fatty acid-binding protein 5 (135 aa).

The residue at position 2 (alanine 2) is an N-acetylalanine. Residue lysine 17 is modified to N6-acetyllysine. Positions 24–34 match the Nuclear localization signal motif; it reads KELGVGIALRK. Positions 43 and 109 each coordinate N-eicosanoyl ethanolamine. Cysteine 120 and cysteine 127 are disulfide-bonded. Residue 129-131 coordinates (9Z,12Z)-octadecadienoate; it reads RIY. An N-eicosanoyl ethanolamine-binding site is contributed by tyrosine 131. Tyrosine 131 is a binding site for hexadecanoate. A Phosphotyrosine modification is found at tyrosine 131.

Belongs to the calycin superfamily. Fatty-acid binding protein (FABP) family. Monomer. Homodimer. Keratinocytes; highly expressed in psoriatic skin. Expressed in brain gray matter.

Its subcellular location is the cytoplasm. It is found in the nucleus. It localises to the synapse. The protein resides in the postsynaptic density. The protein localises to the secreted. The enzyme catalyses hexadecanoate(out) = hexadecanoate(in). It carries out the reaction (9Z,12Z)-octadecadienoate(out) = (9Z,12Z)-octadecadienoate(in). The catalysed reaction is (9Z)-octadecenoate(out) = (9Z)-octadecenoate(in). Intracellular carrier for long-chain fatty acids and related active lipids, such as endocannabinoids, that regulate the metabolism and actions of the ligands they bind. In addition to the cytosolic transport, selectively delivers specific fatty acids from the cytosol to the nucleus, wherein they activate nuclear receptors. Delivers retinoic acid to the nuclear receptor peroxisome proliferator-activated receptor delta; which promotes proliferation and survival. May also serve as a synaptic carrier of endocannabinoid at central synapses and thus controls retrograde endocannabinoid signaling. Modulates inflammation by regulating PTGES induction via NF-kappa-B activation, and prostaglandin E2 (PGE2) biosynthesis during inflammation. May be involved in keratinocyte differentiation. In Homo sapiens (Human), this protein is Fatty acid-binding protein 5.